Consider the following 397-residue polypeptide: Lipoyl synthase 2, chloroplastic (397 aa).

Residues 1 to 35 (MIEQSLSKPSFSLSIPIPKAPKSKSSFFCSYSKIR) constitute a chloroplast transit peptide. Positions 49–85 (AKHPQNSTTINNGSSSSASVDLKNNEKGPYPYPGGGK) are disordered. Residues 54 to 67 (NSTTINNGSSSSAS) show a composition bias toward low complexity. The [4Fe-4S] cluster site is built by C128, C133, C139, C159, C163, C166, and S374. In terms of domain architecture, Radical SAM core spans 142-363 (GGGDGIATAT…KEYGESIGFR (222 aa)).

The protein belongs to the radical SAM superfamily. Lipoyl synthase family. It depends on [4Fe-4S] cluster as a cofactor.

Its subcellular location is the plastid. It localises to the chloroplast. It carries out the reaction [[Fe-S] cluster scaffold protein carrying a second [4Fe-4S](2+) cluster] + N(6)-octanoyl-L-lysyl-[protein] + 2 oxidized [2Fe-2S]-[ferredoxin] + 2 S-adenosyl-L-methionine + 4 H(+) = [[Fe-S] cluster scaffold protein] + N(6)-[(R)-dihydrolipoyl]-L-lysyl-[protein] + 4 Fe(3+) + 2 hydrogen sulfide + 2 5'-deoxyadenosine + 2 L-methionine + 2 reduced [2Fe-2S]-[ferredoxin]. The protein operates within protein modification; protein lipoylation via endogenous pathway; protein N(6)-(lipoyl)lysine from octanoyl-[acyl-carrier-protein]: step 2/2. In terms of biological role, catalyzes the radical-mediated insertion of two sulfur atoms into the C-6 and C-8 positions of the octanoyl moiety bound to the lipoyl domains of lipoate-dependent enzymes, thereby converting the octanoylated domains into lipoylated derivatives. The protein is Lipoyl synthase 2, chloroplastic of Populus trichocarpa (Western balsam poplar).